A 406-amino-acid chain; its full sequence is NADH-quinone oxidoreductase subunit D (406 aa).

It belongs to the complex I 49 kDa subunit family. As to quaternary structure, NDH-1 is composed of 14 different subunits. Subunits NuoB, C, D, E, F, and G constitute the peripheral sector of the complex.

Its subcellular location is the cell inner membrane. It carries out the reaction a quinone + NADH + 5 H(+)(in) = a quinol + NAD(+) + 4 H(+)(out). NDH-1 shuttles electrons from NADH, via FMN and iron-sulfur (Fe-S) centers, to quinones in the respiratory chain. The immediate electron acceptor for the enzyme in this species is believed to be ubiquinone. Couples the redox reaction to proton translocation (for every two electrons transferred, four hydrogen ions are translocated across the cytoplasmic membrane), and thus conserves the redox energy in a proton gradient. The polypeptide is NADH-quinone oxidoreductase subunit D (Acidiphilium cryptum (strain JF-5)).